A 77-amino-acid polypeptide reads, in one-letter code: DNA-directed RNA polymerase subunit epsilon (77 aa).

The protein belongs to the RNA polymerase subunit epsilon family. In terms of assembly, RNAP is composed of a core of 2 alpha, a beta and a beta' subunit. The core is associated with a delta subunit, and at least one of epsilon or omega. When a sigma factor is associated with the core the holoenzyme is formed, which can initiate transcription.

The enzyme catalyses RNA(n) + a ribonucleoside 5'-triphosphate = RNA(n+1) + diphosphate. In terms of biological role, a non-essential component of RNA polymerase (RNAP). The polypeptide is DNA-directed RNA polymerase subunit epsilon (Streptococcus pneumoniae serotype 19F (strain G54)).